The chain runs to 439 residues: Xylose isomerase (439 aa).

Catalysis depends on residues His-101 and Asp-104. The Mg(2+) site is built by Glu-232, Glu-268, His-271, Asp-296, Asp-307, Asp-309, and Asp-339.

This sequence belongs to the xylose isomerase family. Homotetramer. It depends on Mg(2+) as a cofactor.

It localises to the cytoplasm. It catalyses the reaction alpha-D-xylose = alpha-D-xylulofuranose. The chain is Xylose isomerase from Actinobacillus pleuropneumoniae serotype 5b (strain L20).